Here is a 354-residue protein sequence, read N- to C-terminus: NADH-quinone oxidoreductase subunit H (354 aa).

8 helical membrane passes run 25 to 45, 91 to 111, 126 to 146, 170 to 190, 205 to 225, 257 to 277, 290 to 310, and 330 to 350; these read LVRI…LILW, WVYL…WAVI, LLYA…AGWA, MGFA…SDIV, FLSW…VSGI, LFFL…SILF, FIPG…VFIW, and VFLP…MSPL.

The protein belongs to the complex I subunit 1 family. As to quaternary structure, NDH-1 is composed of 14 different subunits. Subunits NuoA, H, J, K, L, M, N constitute the membrane sector of the complex.

It is found in the cell inner membrane. It carries out the reaction a quinone + NADH + 5 H(+)(in) = a quinol + NAD(+) + 4 H(+)(out). NDH-1 shuttles electrons from NADH, via FMN and iron-sulfur (Fe-S) centers, to quinones in the respiratory chain. The immediate electron acceptor for the enzyme in this species is believed to be ubiquinone. Couples the redox reaction to proton translocation (for every two electrons transferred, four hydrogen ions are translocated across the cytoplasmic membrane), and thus conserves the redox energy in a proton gradient. This subunit may bind ubiquinone. In Paraburkholderia phymatum (strain DSM 17167 / CIP 108236 / LMG 21445 / STM815) (Burkholderia phymatum), this protein is NADH-quinone oxidoreductase subunit H.